The primary structure comprises 262 residues: Mediator of RNA polymerase II transcription subunit 8 (262 aa).

Residues 168–211 (LEEKEMGVKNVITGLKRQLDEGDEEDEEEEEEEEDMQGEEMEVV) are a coiled coil. The tract at residues 183-206 (KRQLDEGDEEDEEEEEEEEDMQGE) is disordered. Over residues 188-206 (EGDEEDEEEEEEEEDMQGE) the composition is skewed to acidic residues.

Belongs to the Mediator complex subunit 8 family. As to quaternary structure, component of the Mediator complex.

The protein localises to the nucleus. Component of the Mediator complex, a coactivator involved in the regulated transcription of nearly all RNA polymerase II-dependent genes. Mediator functions as a bridge to convey information from gene-specific regulatory proteins to the basal RNA polymerase II transcription machinery. Mediator is recruited to promoters by direct interactions with regulatory proteins and serves as a scaffold for the assembly of a functional preinitiation complex with RNA polymerase II and the general transcription factors. In Coccidioides immitis (strain RS) (Valley fever fungus), this protein is Mediator of RNA polymerase II transcription subunit 8 (MED8).